The sequence spans 279 residues: Urease accessory protein UreD (279 aa).

It belongs to the UreD family. UreD, UreF and UreG form a complex that acts as a GTP-hydrolysis-dependent molecular chaperone, activating the urease apoprotein by helping to assemble the nickel containing metallocenter of UreC. The UreE protein probably delivers the nickel.

The protein resides in the cytoplasm. Functionally, required for maturation of urease via the functional incorporation of the urease nickel metallocenter. The chain is Urease accessory protein UreD from Paracoccus denitrificans (strain Pd 1222).